The chain runs to 86 residues: MKTLLLTLVVVTIVCLDLGYTLTCLICPEKDCQKVHTCRNEEKICVKRFYDKNQLGWRAQRGCAVSCPKAKPNETVQCCSTDDCNR.

An N-terminal signal peptide occupies residues 1–23; that stretch reads MKTLLLTLVVVTIVCLDLGYTLT. Intrachain disulfides connect cysteine 24–cysteine 45, cysteine 27–cysteine 32, cysteine 38–cysteine 63, cysteine 67–cysteine 78, and cysteine 79–cysteine 84.

The protein belongs to the three-finger toxin family. Ancestral subfamily. Orphan group II sub-subfamily. Expressed by the venom gland.

It localises to the secreted. Binds with low affinity to muscular (alpha-1-beta-1-delta-epsilon/CHRNA1-CHRNB1-CHRND-CHRNE) and very low affinity to neuronal (alpha-7/CHRNA7) nicotinic acetylcholine receptor (nAChR). The sequence is that of Weak toxin 3 from Bungarus candidus (Malayan krait).